A 421-amino-acid chain; its full sequence is Forkhead box protein J1 (421 aa).

2 disordered regions span residues 1-32 and 77-110; these read MAES…LDDS and ADPA…PPPD. The segment covering 11–21 has biased composition (gly residues); it reads AGPGEEAGPEG. Over residues 90–99 the composition is skewed to polar residues; the sequence is KPTSSCTSRS. Residues 120–210 constitute a DNA-binding region (fork-head); sequence VKPPYSYATL…YAERLLSGAF (91 aa).

Belongs to the FOXJ1 family. In terms of tissue distribution, predominantly expressed in tissues containing motile cilia.

The protein localises to the nucleus. Functionally, transcription factor specifically required for the formation of motile cilia. Acts by activating transcription of genes that mediate assembly of motile cilia, such as CFAP157. Binds the DNA consensus sequences 5'-HWDTGTTTGTTTA-3' or 5'-KTTTGTTGTTKTW-3' (where H is not G, W is A or T, D is not C, and K is G or T). Activates the transcription of a variety of ciliary proteins in the developing brain and lung. In Mus musculus (Mouse), this protein is Forkhead box protein J1.